A 434-amino-acid chain; its full sequence is Isocitrate lyase (434 aa).

Ser91–Trp93 is a substrate binding site. Position 157 (Asp157) interacts with Mg(2+). The active-site Proton acceptor is Cys195. Substrate contacts are provided by residues Gly196 to His197, Arg232, Asn317 to Ser321, and Thr351.

This sequence belongs to the isocitrate lyase/PEP mutase superfamily. Isocitrate lyase family. As to quaternary structure, homotetramer. Mg(2+) is required as a cofactor.

It catalyses the reaction D-threo-isocitrate = glyoxylate + succinate. It functions in the pathway carbohydrate metabolism; glyoxylate cycle; (S)-malate from isocitrate: step 1/2. Its function is as follows. Involved in the metabolic adaptation in response to environmental changes. Catalyzes the reversible formation of succinate and glyoxylate from isocitrate, a key step of the glyoxylate cycle, which operates as an anaplerotic route for replenishing the tricarboxylic acid cycle during growth on fatty acid substrates. The protein is Isocitrate lyase (aceA) of Escherichia coli O6:H1 (strain CFT073 / ATCC 700928 / UPEC).